We begin with the raw amino-acid sequence, 488 residues long: DNA polymerase II small subunit (488 aa).

Belongs to the DNA polymerase delta/II small subunit family. Heterodimer of a large subunit and a small subunit.

It carries out the reaction DNA(n) + a 2'-deoxyribonucleoside 5'-triphosphate = DNA(n+1) + diphosphate. The enzyme catalyses Exonucleolytic cleavage in the 3'- to 5'-direction to yield nucleoside 5'-phosphates.. Its function is as follows. Possesses two activities: a DNA synthesis (polymerase) and an exonucleolytic activity that degrades single-stranded DNA in the 3' to 5' direction. Has a template-primer preference which is characteristic of a replicative DNA polymerase. In Thermoplasma acidophilum (strain ATCC 25905 / DSM 1728 / JCM 9062 / NBRC 15155 / AMRC-C165), this protein is DNA polymerase II small subunit (polB).